The chain runs to 499 residues: uncharacterized protein (499 aa).

This is an uncharacterized protein from Metamycoplasma hominis (strain ATCC 23114 / DSM 25592 / NBRC 14850 / NCTC 10111 / PG21) (Mycoplasma hominis).